A 645-amino-acid polypeptide reads, in one-letter code: MDQRPKFGMILFYIVLGVFLMVALRGLYTTDTNLSVPYNRFLEDVNDKKIIKIVIYDDGRIVYTTSESSKRSLETKVSPQTLSTDRFQNYIDQLVTDGVNVVYEKGNDSLFWVNLLGTIIPLAIIVFIWFFAMRSLSGRNSQAFTFTKSPAKKYLSNDKNVTFKDVAGVDEAIEELQDAVNYLKNPNAFSQTGARMPKGILLVGPPGTGKTLLARAVAGEANVPFFYISGSDFVELFVGVGAARVRDLFSQAKASAPSIIFIDEIDAVGRHRGAGLGGGHDEREQTLNQILVEMDGFDAKTGVIVMAATNRPDILDHALLRPGRFDKKITVDPPDVKGRAEILKIHMRGKPVDPDVDVWLLARRTPGFVGADLENLVNEAAILAARRKKKIIGMKELEEAIDRVIAGPARKSRIMNPKEKKIVAYHELGHAIVGLALPNAYPVHKVTVIPRGSASLGFTESLPSEDRYLVSRSEMLDNLAQILGGRAAEEIVFGEITTGAANDLERATQMARTMVCQLGMSDRLGPIAWGKEEGEVFLGRELTRMRNYSEEIASEIDNEVKKIVIEAHERARKLVEKFRDKLDKAAEYLIEKETITGKELAEIVGLAESGNYYRDPLAETKGSKRKVSAVSTNEEAKEGNEDEKN.

The Cytoplasmic portion of the chain corresponds to 1–6 (MDQRPK). Residues 7 to 27 (FGMILFYIVLGVFLMVALRGL) traverse the membrane as a helical segment. Over 28–110 (YTTDTNLSVP…VVYEKGNDSL (83 aa)) the chain is Periplasmic. A helical transmembrane segment spans residues 111–131 (FWVNLLGTIIPLAIIVFIWFF). Residues 132–645 (AMRSLSGRNS…AKEGNEDEKN (514 aa)) lie on the Cytoplasmic side of the membrane. 204 to 211 (GPPGTGKT) contacts ATP. His-426 is a Zn(2+) binding site. The active site involves Glu-427. Zn(2+) is bound by residues His-430 and Asp-503. Positions 623–645 (SKRKVSAVSTNEEAKEGNEDEKN) are disordered. A compositionally biased stretch (basic and acidic residues) spans 634 to 645 (EEAKEGNEDEKN).

The protein in the central section; belongs to the AAA ATPase family. This sequence in the C-terminal section; belongs to the peptidase M41 family. In terms of assembly, homohexamer. The cofactor is Zn(2+).

It is found in the cell inner membrane. Acts as a processive, ATP-dependent zinc metallopeptidase for both cytoplasmic and membrane proteins. Plays a role in the quality control of integral membrane proteins. The protein is ATP-dependent zinc metalloprotease FtsH of Kosmotoga olearia (strain ATCC BAA-1733 / DSM 21960 / TBF 19.5.1).